The sequence spans 445 residues: Tubulin beta-3 chain (445 aa).

Residues Gln-11, Glu-69, Ser-138, Gly-142, Thr-143, Gly-144, Asn-204, and Asn-226 each contribute to the GTP site. Glu-69 serves as a coordination point for Mg(2+). The disordered stretch occupies residues 421-445; that stretch reads EYQQYQDATADEEEEYDEEEEEEAA. The span at 429 to 445 shows a compositional bias: acidic residues; sequence TADEEEEYDEEEEEEAA.

It belongs to the tubulin family. As to quaternary structure, dimer of alpha and beta chains. A typical microtubule is a hollow water-filled tube with an outer diameter of 25 nm and an inner diameter of 15 nM. Alpha-beta heterodimers associate head-to-tail to form protofilaments running lengthwise along the microtubule wall with the beta-tubulin subunit facing the microtubule plus end conferring a structural polarity. Microtubules usually have 13 protofilaments but different protofilament numbers can be found in some organisms and specialized cells. Mg(2+) serves as cofactor.

The protein resides in the cytoplasm. Its subcellular location is the cytoskeleton. Functionally, tubulin is the major constituent of microtubules, a cylinder consisting of laterally associated linear protofilaments composed of alpha- and beta-tubulin heterodimers. Microtubules grow by the addition of GTP-tubulin dimers to the microtubule end, where a stabilizing cap forms. Below the cap, tubulin dimers are in GDP-bound state, owing to GTPase activity of alpha-tubulin. The protein is Tubulin beta-3 chain (TUBB3) of Triticum aestivum (Wheat).